The sequence spans 223 residues: Sigma non-opioid intracellular receptor 1 (223 aa).

Topologically, residues 1 to 9 are lumenal; it reads MQWAVGRRW. A targeting to endoplasmic reticulum-associated lipid droplets region spans residues 2 to 8; sequence QWAVGRR. A helical membrane pass occupies residues 10-30; sequence AWAALLLAVAAVLTQVVWLWL. Residues 31-223 are Cytoplasmic-facing; it reads GTQSFVFQRE…LTTYLFGQDP (193 aa). The tract at residues 99–106 is important for ligand-binding; it reads SLSEYVLL. Residues 177 to 223 form a C-terminal hydrophobic region region; it reads VIPSTLAFALADTVFSTQDFLTLFYTLRSYARGLRLELTTYLFGQDP.

It belongs to the ERG2 family. In terms of assembly, homotrimer. Forms a ternary complex with ANK2 and ITPR3. The complex is disrupted by agonists. Interacts with KCNA4. Interacts with KCNA2; cocaine consumption leads to increased interaction. Interacts with RNF112 in an oxidative stress-regulated manner. Widely expressed with higher expression in liver, colon, prostate, placenta, small intestine, heart and pancreas. Expressed in the retina by retinal pigment epithelial cells. Expressed in alpha-motor neurons.

The protein localises to the nucleus inner membrane. Its subcellular location is the nucleus outer membrane. The protein resides in the nucleus envelope. It is found in the cytoplasmic vesicle. It localises to the endoplasmic reticulum membrane. The protein localises to the membrane. Its subcellular location is the lipid droplet. The protein resides in the cell junction. It is found in the cell membrane. It localises to the cell projection. The protein localises to the growth cone. Its subcellular location is the postsynaptic density membrane. Its function is as follows. Functions in lipid transport from the endoplasmic reticulum and is involved in a wide array of cellular functions probably through regulation of the biogenesis of lipid microdomains at the plasma membrane. Involved in the regulation of different receptors it plays a role in BDNF signaling and EGF signaling. Also regulates ion channels like the potassium channel and could modulate neurotransmitter release. Plays a role in calcium signaling through modulation together with ANK2 of the ITP3R-dependent calcium efflux at the endoplasmic reticulum. Plays a role in several other cell functions including proliferation, survival and death. Originally identified for its ability to bind various psychoactive drugs it is involved in learning processes, memory and mood alteration. Necessary for proper mitochondrial axonal transport in motor neurons, in particular the retrograde movement of mitochondria. Plays a role in protecting cells against oxidative stress-induced cell death via its interaction with RNF112. This Homo sapiens (Human) protein is Sigma non-opioid intracellular receptor 1 (SIGMAR1).